A 399-amino-acid chain; its full sequence is uncharacterized protein (399 aa).

Residues 197-206 show a composition bias toward polar residues; it reads ENSSASSVTS. Residues 197-224 are disordered; sequence ENSSASSVTSEECEQDVMDEQSAEDNEE. Residues 207–224 show a composition bias toward acidic residues; it reads EECEQDVMDEQSAEDNEE.

This is an uncharacterized protein from Diadromus pulchellus (Parasitic wasp).